A 485-amino-acid polypeptide reads, in one-letter code: E3 ubiquitin-protein ligase RNF8 (485 aa).

Residues 38-92 (VTVGRGFGVTYQLVSKICPLMISRNHCVLKQNPEGQWTIMDNKSLNGVWLNRARL) form the FHA domain. Positions 68–72 (QNPEG) are required for interaction with PIWIL1. A Phosphoserine modification is found at Ser-157. A disordered region spans residues 181-220 (CESGQPVKSQGKGEVASTPSDNLDPKLTALEPSKTTGAPI). The RING-type zinc-finger motif lies at 403–441 (CIICSEYFIEAVTLNCAHSFCSYCINEWMKRKIECPICR).

This sequence belongs to the RNF8 family. In terms of assembly, homodimer. Forms a E2-E3 ubiquitin ligase complex composed of the RNF8 homodimer and a E2 heterodimer of UBE2N and UBE2V2. Interacts with class III E2s, including UBE2E1, UBE2E2, and UBE2E3 and with UBE2N. Interacts with RXRA. Interacts (via FHA domain) with ATM-phosphorylated MDC1. Interacts (via FHA domain) with 'Thr-4827' phosphorylated HERC2 (via C-terminus). Interacts with PIWIL1; leading to sequester RNF8 in the cytoplasm. Interacts with WRAP53/TCAB1. As to quaternary structure, (Microbial infection) Interacts (via FHA domain) with phosphorylated human herpesvirus 1 ICP0 protein; leading to RNF8 degradation by the proteasome. Post-translationally, autoubiquitinated through 'Lys-48' and 'Lys-63' of ubiquitin. 'Lys-63' polyubiquitination is mediated by UBE2N. 'Lys-29'-type polyubiquitination is also observed, but it doesn't require its own functional RING-type zinc finger. As to expression, ubiquitous. In fetal tissues, highest expression in brain, thymus and liver. In adult tissues, highest levels in brain and testis, lowest levels in peripheral blood cells.

Its subcellular location is the nucleus. It is found in the cytoplasm. The protein localises to the midbody. It localises to the chromosome. The protein resides in the telomere. The enzyme catalyses S-ubiquitinyl-[E2 ubiquitin-conjugating enzyme]-L-cysteine + [acceptor protein]-L-lysine = [E2 ubiquitin-conjugating enzyme]-L-cysteine + N(6)-ubiquitinyl-[acceptor protein]-L-lysine.. It functions in the pathway protein modification; protein ubiquitination. Functionally, E3 ubiquitin-protein ligase that plays a key role in DNA damage signaling via 2 distinct roles: by mediating the 'Lys-63'-linked ubiquitination of histones H2A and H2AX and promoting the recruitment of DNA repair proteins at double-strand breaks (DSBs) sites, and by catalyzing 'Lys-48'-linked ubiquitination to remove target proteins from DNA damage sites. Following DNA DSBs, it is recruited to the sites of damage by ATM-phosphorylated MDC1 and catalyzes the 'Lys-63'-linked ubiquitination of histones H2A and H2AX, thereby promoting the formation of TP53BP1 and BRCA1 ionizing radiation-induced foci (IRIF). Also controls the recruitment of UIMC1-BRCC3 (RAP80-BRCC36) and PAXIP1/PTIP to DNA damage sites. Promotes the recruitment of NBN to DNA damage sites by catalyzing 'Lys-6'-linked ubiquitination of NBN. Also recruited at DNA interstrand cross-links (ICLs) sites and catalyzes 'Lys-63'-linked ubiquitination of histones H2A and H2AX, leading to recruitment of FAAP20/C1orf86 and Fanconi anemia (FA) complex, followed by interstrand cross-link repair. H2A ubiquitination also mediates the ATM-dependent transcriptional silencing at regions flanking DSBs in cis, a mechanism to avoid collision between transcription and repair intermediates. Promotes the formation of 'Lys-63'-linked polyubiquitin chains via interactions with the specific ubiquitin-conjugating UBE2N/UBC13 and ubiquitinates non-histone substrates such as PCNA. Substrates that are polyubiquitinated at 'Lys-63' are usually not targeted for degradation. Also catalyzes the formation of 'Lys-48'-linked polyubiquitin chains via interaction with the ubiquitin-conjugating UBE2L6/UBCH8, leading to degradation of substrate proteins such as CHEK2, JMJD2A/KDM4A and KU80/XRCC5: it is still unclear how the preference toward 'Lys-48'- versus 'Lys-63'-linked ubiquitination is regulated but it could be due to RNF8 ability to interact with specific E2 specific ligases. For instance, interaction with phosphorylated HERC2 promotes the association between RNF8 and UBE2N/UBC13 and favors the specific formation of 'Lys-63'-linked ubiquitin chains. Promotes non-homologous end joining (NHEJ) by promoting the 'Lys-48'-linked ubiquitination and degradation the of KU80/XRCC5. Following DNA damage, mediates the ubiquitination and degradation of JMJD2A/KDM4A in collaboration with RNF168, leading to unmask H4K20me2 mark and promote the recruitment of TP53BP1 at DNA damage sites. Following DNA damage, mediates the ubiquitination and degradation of POLD4/p12, a subunit of DNA polymerase delta. In the absence of POLD4, DNA polymerase delta complex exhibits higher proofreading activity. In addition to its function in damage signaling, also plays a role in higher-order chromatin structure by mediating extensive chromatin decondensation. Involved in the activation of ATM by promoting histone H2B ubiquitination, which indirectly triggers histone H4 'Lys-16' acetylation (H4K16ac), establishing a chromatin environment that promotes efficient activation of ATM kinase. Required in the testis, where it plays a role in the replacement of histones during spermatogenesis. At uncapped telomeres, promotes the joining of deprotected chromosome ends by inducing H2A ubiquitination and TP53BP1 recruitment, suggesting that it may enhance cancer development by aggravating telomere-induced genome instability in case of telomeric crisis. Promotes the assembly of RAD51 at DNA DSBs in the absence of BRCA1 and TP53BP1 Also involved in class switch recombination in immune system, via its role in regulation of DSBs repair. May be required for proper exit from mitosis after spindle checkpoint activation and may regulate cytokinesis. May play a role in the regulation of RXRA-mediated transcriptional activity. Not involved in RXRA ubiquitination by UBE2E2. This chain is E3 ubiquitin-protein ligase RNF8, found in Homo sapiens (Human).